We begin with the raw amino-acid sequence, 235 residues long: Large ribosomal subunit protein uL1 (235 aa).

Belongs to the universal ribosomal protein uL1 family. In terms of assembly, part of the 50S ribosomal subunit.

Binds directly to 23S rRNA. The L1 stalk is quite mobile in the ribosome, and is involved in E site tRNA release. In terms of biological role, protein L1 is also a translational repressor protein, it controls the translation of the L11 operon by binding to its mRNA. This chain is Large ribosomal subunit protein uL1, found in Mycolicibacterium smegmatis (strain ATCC 700084 / mc(2)155) (Mycobacterium smegmatis).